Reading from the N-terminus, the 510-residue chain is tRNA(Ile)-lysidine synthase (510 aa).

Residue 32 to 37 (SGGLDS) coordinates ATP.

Belongs to the tRNA(Ile)-lysidine synthase family.

The protein resides in the cytoplasm. The enzyme catalyses cytidine(34) in tRNA(Ile2) + L-lysine + ATP = lysidine(34) in tRNA(Ile2) + AMP + diphosphate + H(+). Functionally, ligates lysine onto the cytidine present at position 34 of the AUA codon-specific tRNA(Ile) that contains the anticodon CAU, in an ATP-dependent manner. Cytidine is converted to lysidine, thus changing the amino acid specificity of the tRNA from methionine to isoleucine. This Blochmanniella pennsylvanica (strain BPEN) protein is tRNA(Ile)-lysidine synthase.